Consider the following 377-residue polypeptide: Gibberellin 20 oxidase 1 (377 aa).

The Fe2OG dioxygenase domain occupies 222-322 (ENDSIMRLNY…RKSLAFFLCP (101 aa)). Fe cation contacts are provided by histidine 247, aspartate 249, and histidine 303. Arginine 313 is a catalytic residue.

Belongs to the iron/ascorbate-dependent oxidoreductase family. GA20OX subfamily. Fe(2+) serves as cofactor. The cofactor is L-ascorbate. In terms of tissue distribution, highly expressed in stems and inflorescence tissues. Detected in seeds, roots, leaves and siliques.

The enzyme catalyses gibberellin A12 + 2 2-oxoglutarate + 3 O2 + H(+) = gibberellin A9 + 2 succinate + 3 CO2 + 2 H2O. The catalysed reaction is gibberellin A12 + 2-oxoglutarate + O2 = gibberellin A15 + succinate + CO2. It catalyses the reaction gibberellin A15 + 2-oxoglutarate + O2 = gibberellin A24 + succinate + CO2 + H2O. It carries out the reaction gibberellin A53 + 2-oxoglutarate + O2 = gibberellin A44 + succinate + CO2. Its pathway is plant hormone biosynthesis; gibberellin biosynthesis. Its function is as follows. Key oxidase enzyme in the biosynthesis of gibberellin that catalyzes the conversion of GA12 to GA9, via a three-step oxidation at C-20 of the GA skeleton. GA53 is less effectively oxidized than GA12 and is only oxidized one step to GA44. Involved in the promotion of the floral transition, fertility and silique elongation, but plays only a minor role in elongation of seedling organs. Acts redundantly with GA20OX2. The sequence is that of Gibberellin 20 oxidase 1 (GA20OX1) from Arabidopsis thaliana (Mouse-ear cress).